We begin with the raw amino-acid sequence, 397 residues long: Elongation factor Tu (397 aa).

In terms of domain architecture, tr-type G spans 10–206; that stretch reads KPHVNIGTIG…AVDTSIPQPE (197 aa). Residues 19–26 form a G1 region; it reads GHIDHGKT. 19-26 is a GTP binding site; the sequence is GHIDHGKT. A Mg(2+)-binding site is contributed by Thr-26. The segment at 62-66 is G2; the sequence is GITIS. Residues 83–86 are G3; it reads DCPG. GTP contacts are provided by residues 83 to 87 and 138 to 141; these read DCPGH and NKSD. A G4 region spans residues 138-141; it reads NKSD. A G5 region spans residues 176–178; it reads SAL.

Belongs to the TRAFAC class translation factor GTPase superfamily. Classic translation factor GTPase family. EF-Tu/EF-1A subfamily. As to quaternary structure, monomer.

The protein localises to the cytoplasm. The catalysed reaction is GTP + H2O = GDP + phosphate + H(+). Its function is as follows. GTP hydrolase that promotes the GTP-dependent binding of aminoacyl-tRNA to the A-site of ribosomes during protein biosynthesis. In Salinispora tropica (strain ATCC BAA-916 / DSM 44818 / JCM 13857 / NBRC 105044 / CNB-440), this protein is Elongation factor Tu.